Consider the following 750-residue polypeptide: Serine/threonine-protein kinase GE16371 (750 aa).

Doublecortin domains are found at residues 159-245 (LRIK…VEYN) and 315-398 (RIVT…AEDF). One can recognise a Protein kinase domain in the interval 479 to 737 (YTLGKIIGDG…SEDILDHYWT (259 aa)). Residues 485-493 (IGDGNFAIV) and K508 contribute to the ATP site. The active-site Proton acceptor is D600.

Belongs to the protein kinase superfamily. CAMK Ser/Thr protein kinase family. CaMK subfamily.

It catalyses the reaction L-seryl-[protein] + ATP = O-phospho-L-seryl-[protein] + ADP + H(+). It carries out the reaction L-threonyl-[protein] + ATP = O-phospho-L-threonyl-[protein] + ADP + H(+). This chain is Serine/threonine-protein kinase GE16371, found in Drosophila yakuba (Fruit fly).